The sequence spans 362 residues: Probable S-adenosylmethionine-dependent methyltransferase At5g37990 (362 aa).

6 residues coordinate S-adenosyl-L-homocysteine: tyrosine 19, cysteine 66, asparagine 71, aspartate 107, serine 136, and phenylalanine 137. Mg(2+)-binding residues include asparagine 175, glutamate 261, and phenylalanine 263.

Belongs to the methyltransferase superfamily. Type-7 methyltransferase family. As to quaternary structure, homodimer. The cofactor is Mg(2+).

The polypeptide is Probable S-adenosylmethionine-dependent methyltransferase At5g37990 (Arabidopsis thaliana (Mouse-ear cress)).